A 340-amino-acid polypeptide reads, in one-letter code: Transcription initiation factor IIB (340 aa).

A TFIIB-type zinc finger spans residues 16–49; sequence VKMICSECREDPPNLVEEFSSGDTVCGSCGLVLG. Residues C20, C23, C41, and C44 each contribute to the Zn(2+) site. 2 tandem repeats follow at residues 128-204 and 239-315.

The protein belongs to the TFIIB family. As to quaternary structure, associates with TFIID-IIA (DA complex) to form TFIID-IIA-IIB (DAB-complex) which is then recognized by polymerase II.

It is found in the nucleus. In terms of biological role, general factor that plays a major role in the activation of eukaryotic genes transcribed by RNA polymerase II. In Schizosaccharomyces pombe (strain 972 / ATCC 24843) (Fission yeast), this protein is Transcription initiation factor IIB (sua7).